Reading from the N-terminus, the 588-residue chain is Arginine--tRNA ligase (588 aa).

Residues 126 to 136 carry the 'HIGH' region motif; that stretch reads PNIAKEMHVGH.

The protein belongs to the class-I aminoacyl-tRNA synthetase family. Monomer.

It localises to the cytoplasm. It catalyses the reaction tRNA(Arg) + L-arginine + ATP = L-arginyl-tRNA(Arg) + AMP + diphosphate. This chain is Arginine--tRNA ligase, found in Nostoc sp. (strain PCC 7120 / SAG 25.82 / UTEX 2576).